Here is a 505-residue protein sequence, read N- to C-terminus: RNA-splicing ligase RtcB homolog (505 aa).

Residues aspartate 119, cysteine 122, histidine 227, and histidine 259 each contribute to the Mn(2+) site. 226 to 230 (NHYAE) serves as a coordination point for GMP. Serine 300 bears the Phosphoserine mark. A Mn(2+)-binding site is contributed by histidine 353. GMP is bound by residues 353–354 (HN), 402–405 (GGTM), serine 409, and 428–431 (HGAG). Catalysis depends on histidine 428, which acts as the GMP-histidine intermediate. Residue lysine 496 forms a Glycyl lysine isopeptide (Lys-Gly) (interchain with G-Cter in SUMO2) linkage. A GMP-binding site is contributed by lysine 504.

The protein belongs to the RtcB family. As to quaternary structure, catalytic component of the tRNA-splicing ligase complex. Requires Mn(2+) as cofactor.

It localises to the nucleus. It is found in the cytoplasm. The enzyme catalyses a 3'-end 3'-phospho-ribonucleotide-RNA + a 5'-end dephospho-ribonucleoside-RNA + GTP = a ribonucleotidyl-ribonucleotide-RNA + GMP + diphosphate. It carries out the reaction a 3'-end 2',3'-cyclophospho-ribonucleotide-RNA + a 5'-end dephospho-ribonucleoside-RNA + GTP + H2O = a ribonucleotidyl-ribonucleotide-RNA + GMP + diphosphate + H(+). Its function is as follows. Catalytic subunit of the tRNA-splicing ligase complex that acts by directly joining spliced tRNA halves to mature-sized tRNAs by incorporating the precursor-derived splice junction phosphate into the mature tRNA as a canonical 3',5'-phosphodiester. May act as an RNA ligase with broad substrate specificity, and may function toward other RNAs. In Bos taurus (Bovine), this protein is RNA-splicing ligase RtcB homolog.